A 140-amino-acid polypeptide reads, in one-letter code: Large ribosomal subunit protein uL11 (140 aa).

It belongs to the universal ribosomal protein uL11 family. In terms of assembly, part of the ribosomal stalk of the 50S ribosomal subunit. Interacts with L10 and the large rRNA to form the base of the stalk. L10 forms an elongated spine to which L12 dimers bind in a sequential fashion forming a multimeric L10(L12)X complex. Post-translationally, one or more lysine residues are methylated.

Functionally, forms part of the ribosomal stalk which helps the ribosome interact with GTP-bound translation factors. This Enterococcus faecalis (strain ATCC 700802 / V583) protein is Large ribosomal subunit protein uL11.